Reading from the N-terminus, the 143-residue chain is Ribosome maturation factor RimP (143 aa).

The protein belongs to the RimP family.

The protein resides in the cytoplasm. Functionally, required for maturation of 30S ribosomal subunits. The chain is Ribosome maturation factor RimP from Neisseria gonorrhoeae (strain ATCC 700825 / FA 1090).